The sequence spans 174 residues: Heat shock protein 22 (174 aa).

A sHSP domain is found at 44–154 (QIARWQEQEF…TLKEREVTIE (111 aa)). A Phosphothreonine modification is found at T152. Residues 152–174 (TIEQTGEPAKKSAEEPNDKAASQ) form a disordered region. A compositionally biased stretch (basic and acidic residues) spans 159-174 (PAKKSAEEPNDKAASQ).

The protein belongs to the small heat shock protein (HSP20) family.

The protein is Heat shock protein 22 (Hsp22) of Drosophila melanogaster (Fruit fly).